Reading from the N-terminus, the 7913-residue chain is MPSRILPGKHMPAQGHQRREADYWQNALADCKCATFPAIPETVEQCLPDALVEHRFAKLQQNGAATSMSNVARAAWALVVARITNSDDVVFGAVVFGTTRDSNMTIVPVRIETAMDLTIAAYLGMVQQQEEDMTPFEQTGLSSIMQTCPGAQQACQFQSLLAVHSHESNGERLDDQRYALVLEIRPEEDQFSALARFDSRVMDHKTVERLLERFELVMTELCRGGPKMRVQDIHMAGKHDEEEIWKWNATVPEAVERCPHHIFEQRSRAHPNKLAVHAWDGVLTYGELDRLSGTLAGRLLDLGVGPDDLVPLCFEKSMYTVVAMVAVLKAGAGFVLLDPALPEQRLQIIVDQIQAKIMVSSVSTYEMSSRMASEVVAISSGFFSEVEPRPCTQSHPPSPSSVMYVVYTSGSTGTPKGAAITHQNHATALYYQAERLGLTDQSRIYDFSSYSFDISIFNAFSALTLGGCLCVPSDYERQDKLAESITSYNADFIYLTPTVARQLSPQKTPTLQTIAFIGEALHPKDVGIWWDKVRVVNAYGPSECTTASTLRTSPSTPEEACSIGKGAGMVTWIVDPNNHNVLLPPGSIGELLLEGPLIGRGYLGDAKKNAAAFIKDPAWLIKGASGSKGRSGRLYKTGDLVQYLADGNLKFIGRNDNQVKIRGNRVELGEVEHALRDCVETRSVVAEIIIPRGSKSSATLAAFLEAEEEEEDDTESEVTARMLPVPAEIKDKMAQRLPIYMVPTVLFSMKRLPMTASGKIHRKQLRDIGGRFSARQMVEMHTKGRAKRQPLSEVEKQVHRIWSQVLGIDASMIGLDDSFFELGGDSLGAMEVVSEARKVGLELTVVDIFKHRSVENVAGQARRTTNGSLEALSPFSLISKDTDVASLIQDMAMDYELDGASIQDAFPCTSLQEGLVSLTSKSPGDYVMQGILELAPDIDVDAFRNAWEQVATAGQILRTRILQSRHHGTLQIVVDESVSWVEATDLDSYLAEDKKKPMEIGQPLVRYALIKDDNAATRWFVWTIHHSLFDEWSLTLIIDAVTRVYQGKSITMPHFQPFIKYVEKQRDEKMANYWRQSLADCECPSFPALPPSLEQPVTDGVMEHALHHPQHDSSVTASTIIRAAWALITSRMTNSDDVVFGATLSGRGAAVPGVEAIAAPTITTVPVRIRLSREQKVADYLKTVQELATDMIPFEQMGLQHIAKLSPGARQACNFQTLLVIQPHDSSKTQEVLGKWHLSNQQQSFNTYSLILEIQLGETMAARASYDSRVIKPWLVERLLERLDFLMDQLDNAEPDQAVAEVDTVSGKDIEQLWNWNRTVPTTSELCIHHVLETQAHSRPDSPALCAWDGQVTYRELNHLAAQLATHLVKRGVGPEVLVPLYFEKSMWTNVAMLGVLKAGGGFVLLDPSLPEQRLQEMIRQTKAKLLVSSRSNQSASLRLVPEVVTLGSKFFAELASEPDMNGTKGHKETIGQATPFSTAYVLFTSGSTGTPKGVVITHSNVTSAVPEHVRCLGYTAASRIYDFASYSFGASLNNAFAALMAGGCLCIPSDEDRRSNLAASLTALKGTSILLTPSVAESLSPDSVSGLKTLIFGGEAVRHKDVKPWWGKAKVLTAYGSSEVTTVATVNTQASNMDEAAEIGTGAGGVTWVVDPDDHHKLLPPGCIGELLLEGPLVGSGYLGDAIKSAEVFIKNPPAWLLEGASGHQGRRGVLYKTGDLVRYNENGNLSYIGRKDAQVKIRGQRVELGEVEFRVQQCFPEAKQVAAEVVVPCGKKSSPTLAAFLVLDDAQQASSSFQTLPVDTDRMEQLAKQLPSYMVPVLFLAIKEMPMTASGKMNRRRLRELGGTVTAQQLADLGTSGQVAKRQPRTKLERQLQALWARVLNIDASAIGLDDSFYRLGGDSISAMQVSHGARAFHVHIGVVDILRQRTISNLAQATGTQGSTNGATLINAHAPDQPVTRVDNGPAQLSPIQRLYFVLQNDPTACFDQFFYLGLRRTTSHQLVSAALETIVRRHGVLRARFRQNDHGGWEQRISDDVDASLLFRVESGVSGTAEAIAKSRAALSITEGPIFSAVLFDKPDHQTLFLTIHHLVIDLVSWRVLMQELEDIITNGPLTAPPSMDFPTWSAMQAQYAKESLHANAPDLPESQTNMAYWGMESNPNLKSGAIVEHFTMDEPTSSLILGRCNDALGTRPLELMIAALAYSFSRIFSDCALPAVFSEGHGREVWHDSLDITTTLGWFSTIFPVRVSPGANGLIDFIRETKDCIRSLSRNGWSYFTSRFADESNASRFGTDFPVEVMFNYAGFYRNLERQDGLFEQLSVPENCDPPSCRDVRRFALFDFDVQVVRGCIVGEVEFHKDMHHRDDIMRWIGEYQSTLRQMATDLPRISPGWTLSDFPNVFNTYGDIQEFRNQTLVQLGVEPLDVEDIFPCAPLQQGIILAQAKEEANYLRWCDIEIELDANQQLDRAKLTDAWKAVVKRHAMLRAVLVDDFPGSSRPMHVVLKDPELGISWGAETMCFPDFNKYGLQHRLQVCSFGERRARLRLHMNHAITDGFSQSLLCKDLQAAYHDQLEAAGSYKDFILHLENQSQEARLEFWSQYLAGVEPTLFPTSDCTIPSKVEQVAVPNLDSESIRAFCAKWDVTAATIMKLAWGLVLGMYAATPAPCFGNLYSGRDIPVEGIDSIFGPLIGMIPCCIHLNGSKGVLDTLKEVQTDYLSTIPYQHSPLAEVHRAAGLLGSRQLFNTLLSYQKNTDETRGNEGGLTVRVADSYDLTEYDVTIDVVDGTAEIEVLIDFRAGCLSTNDAARLAACFSAAVSDIVANPLKPTKDLCLLGRRDLDIIWGWNSTVPAADERFVHDLIRERSLAQPHEPAICAWDGELSYKELDDLSTRLAGHLHQVGVQPGALVPLCFEKSLYTSVAMLAVVKMGAAFVLLDPSLPEQRLQSMTQQVGSNLILSSASNRHLCARLCKTVVQVSADFIPTTTSSIPRPKTEPHSTAMFAVFTSGSTGTPKGIVLTHTNFTTALMHQAEALGFKETSRVFDFASYAFDLAVHNAFATYVTGGCLCVPSDEDRRGNPASVMKAMRATVVELTPSVSRLIDPATLPDLETIIMGGEALSVDDVNRWWGKARIVNIYGPAETHISTVNADAPSPEEATLLGKGSGLVTWIVDPENRNRLMPPGCIGELALEGPLVGQGYLNDAQKTAASFVDDPAWLLQGSPGHSGRHGRVYFSGDLVRYQDHGSLAFVARKDAQIKIRGQRVELGEVEHCVQQCLPEAIRVVVDVITPQGTSTPMLSAFLQMDKAIEVESPAVEVVRIPTDTKNMLSQRLPGYMVPAVFFYMRRLPQTPSGKTDRIQLRQVGGSFSIQQLATIQTNGQGPKRQPLSEAERKMQHIWAQVLNIDMASIGLDDNFFELGGDSISVMKLVAQARKEGLVLTVAAIFRQPTLANVTHQAVAQLEKGPQDLSPFSLLGEGLDVKAFAEAAMKQHQIPTSVTILDAFPCTPLQEGLLSLSMKRSGNYVLQAKLELSSNIDISRFRNAWEEVVRSLPILRTRIIEHDSLGLLQAVTDENISWIETSGLDDYLEADRQQTMGVGQPLARYALVGESDARWFVWTVHHVLYDGWSEPLIIKAVNKAYQGSSLDLGPSFQTFIKYIQDSDTSKMVDYWRQALNDCEAVPFPPPSSSTEVQVADASVEQPLPRPRNKKFTASTVIRAAWALVAGGATDSGDVCFGVTVSGRNAPVPDIERMVGPTFATLPLRVRLSKNQAIADYLETIQQQATDMIPFEQMGLHRIAKISPGSQQACNFQTLLVIQPQEEDAGENVLGEWHDGDQHQWFNTHGLTILVQISASDITVKASFNAKVISAWAVQLLLQQLAHVMQQLDNGGVKALATIAMATPQDLEKIWAWNQNVPRPADQCIHELIADRVRIHPNAPAVCAWDGELTYQRLDQLSSDLASRLADLGVGPAVFVALCFEKSMWATVAMLAMVKTGGAFVLLDASLPQQRLKSVVGQVEAAMILTSSTNETLSRQLCENVVIAQDLMTGMQDIVRPLPAPELDSVIYAVFTSGTTGTPKGAIINHRSSASAVLHQIKGFGYTTETRVYDFSTYSFDGCILNAFTVLAAGGCLCVPTDDGRKNNLADSMESLRSNAVFLTPSVAELLSPEQLPSLRSMILGGEAIRVKDIQPWWDAESVKIITIYGPSECTPVSMINPEPTSPENAVRLGWGAGQVTWIVDPEDFNSLTPLGSIGELLLEGPLVGQGYLHEPEKTADAFIMDPVWLLQGVDGRPGRHGRLYKTGDLVRYNQDGSISYIGRKDDQVKLRGQRVELGEVERHVRISMPQAKQAVAEVIVPRSDKSNPALAVFLQIEDSMMINGVSTENPPKAAVLLPSADVLQKLAESLPTYMVPTVFFAMRQLPMGTTGKMDRKELRRIGSSFSAQELAQARTAQQGPKRQPASEAERQMQQVWAKVLGIPPASVGRDDNFFQLGGDSITAMKLVGEARKAGLELVVADMFRYPRLHEAATQAQMLGRNTKVPKMLIDGPAEQSFAQARLWFLEQLYPGLTWYLMPCIMRLTGPLRLDALTAAFIALEDRHETLRTTFSTREGTNLQHIHAVRSRELTVVDMSADQESLPHVLSQDETTPFNLENEPGWRVTLYRVGDDEHILSIVLHHIISDGWSIDILRRELSSFYSAALRGEDPLSNIDPLPIQYKDFSVWQRQQAQVDEHERQLKYWMTELETSHPAEFLCDKPRPPTLSGKADVREVCIDGPVYDKLQEFCRTHGMTPFIVLLAAFRATHYRLTGDGDGVIGSPNANRDRWELKDTIGFFVNMQCLRVKIEDESVTFGELVKLVQSAAISSLANQDVPFERLVSKLRKERDLSRHPLIQLVFAVHSQLDLGKFALEGYEIEYIDQSITTRFDLEFHFFTEEKGLRGQLIFSTDLFHPDTIDNVLEVFRTVLEKGLNEPQTPVAALPLMTDGGYDKLDSMGLIQVKQTAYPRNSSIVDEFRQQVAACADRVAVKDASSQLTYAQLDGLSEHVAQWLMSKSLAPETLIGVFCGRSCQSIIAILGILKANHAYLPFDLKIPASRMEGIISSIGHMLVLTGDGVRVPSFALEVEFVMISEALEHGARMSSIQRNTCPSPSPSSLAYVMFTSGSTGRPKGVMVEHRSVLRLIKDDDLRPHGSGIIAHMSNIAFDAATWEIYGALLNGGTVICIDLLTVLDYAATSRIFAEEKIQAIFITPALLKQYLSNCPTAIGLLDTIYVGGDRLDPQDVFTARSLMRGGKVYNGYGPTENTTFSTTYRLPVKDICVNGVAIGRALSNSGAYVMDTQQCLVPLGVVGELVVTGDGLARGYLDSQRNTGRFINVTIDGKTVRAYRTGDLARCRPSDGQIECLRRMDAQVKIRGQRVELGEIEHVLRNHESVNDAVVTLQQDPQGARLIGFITLDEPDIQHKVQRMEQEVDGDDEKKQVEVWEESFDTDIYAGFDNVKPELIGRDFVGWTSMYDGSEIDKGEMNEWLDDTIDTILNGGQAGHVLELGSGSGMILFNLCNNGMRSYVGLDPSQKAVEFVTRAAKSMPMADKIRMYKGTATDVGHLGLTTEYDLAIVNSVAQYFPSLKYLTKVVERVLQQNAKTFFFGDMRSYAMYKEFTVTRSLYRVGKKPTKDDLRRQMASMEQMEVEFQVDPAFFTALPSLLPDLVEHVEILPKKMQATNELSCYRYAAVVHGKGQGLQIRDAEGPWIDFMKDGLHHESLLKLLQSSTSPTVSVANIPYSKTIFERHVLDMLGDADGDEDWLSSARQKANDCASLCAIDLVQLARSTGYQVEISWARQRSQRGGLDAIFHRHESNGQRVMFRFPIDDAHQSLSSQPLRQQVKQKIREQLRDGMQSQLLPYMIPQAVHILDKMPVNENGKVDRRALTESLQSRATRGPLRQPTSKTQRQLQAIWAQVLNTDANSIGLDDSFFQVGGDSLGAMRLVGDARKIGLNLAVADVFRRPVLRDMAEGLPLAKAMESIPKTEVDGPVEQSFAQRRLWFLEQLYPGLTWYMMPSAIRLRGHLELDALNTAVLALEKRHETLRTTFVSQNDVHLQEVHPFQAKKIRVVSVTEDNLMKALEDDQRTPFDLKTEPGWRVTVFRLDDTNYLLSIIMHHIVSDGWSVDILRAELEKFYSAAIRNQDPLALVESLPIQYRDFSVWQKQQDQLDEHQRQLSYWVKQLETSQPAEFLCDKPRPAALSGEAAVESLRIDGALYQQLRTFCRTQSVTPFVALLSTFRVAHFFLTGSTDATMGTVNANRDRWEVKDMIGFFVNMQCIRIRVEAESFKQLVQQVHATTIASFANQDVPFENIVSQLNRGRDLSRHPLAQLVFALHSQMDLGEFVLEGLDTEMVKVPPTTRFDLEFHFFQEQEAFQGEVLYSTDLFDAQTIRNMLSVFKRVLEAGLGDPNAAITSMSLLSDADYAKLDQMGLVEIDRVDCPDASIVDLFRQQALLNPDKVAVKDSSSQLTYAELDQQSDSTARWLAKRCLAPGTLIGVFSSRCCRTVVALLGILKANLAYLPFDVHTPRARMEKILGSVDGQTLVLVGNNVQVPEGLDVSFVPIAETLHEATSEIHITAPNATSLAYVMFTSGSTGNPKGVMINHRGIVRLVKGSNMASYLPSTPTMAHITNIAFDVSGWEIYGALLNGGMVVCISAMDVLDFRAVPEIFAREKIQAAIFTPALLKQYLIQCPPVIGALTALYVAGDRADSQDLFMAQGLMSGHIINAYGPTENSVISTLYCLQNGERCVNGVPIGKAISNSGAYVMDQQQQLVPLGVVGELVVTGDGLARGYTDPGRDIDRFVTVTIGHKRVKAYRTGDYVRYRTDGQLEFFGRIDGQIKIRGHRVELGEIEHCLRSHDSVHDAIVVLQEGQEAQLAAFVTVNEATEDAGQEEDVTDIVNVWGELFDADTYSTIQDVKPETIGRDFTGWVSTYTGQDIDKQEMNEWLDDTMATINAYEPRNVLEIGTGTGMILFNLKGVQSYVGLEPSEKAVEFTVRAAKSMSMLRDKVCVYQGTAADVKRLPTMLPNLVVINSVAQYFPSQEYLVKVIEDVVQLGGVETLFFGDIRSYALNTQFQASRALRIAGEAASKDEIRRKMEDIKRADMELMVDPAFFTALAARFKFIHHVEILPKRMKAVNELSCYRYSAVVHLQHDSQLHVHEVESEWIDFQKNNLNRQSLLELLGQTSSTLAVSNIPFQNTIIERHVVEALDRGQGPDWITSALRNAEHCPSMSVAGLVELAHLACFQVEISCARQYSQRGGLDAIFHRQQPSRGDRVLFRFPTDHNRPSHLLTSRPLRLQLYQTVQEGLFERLQTQLPSYMVPHAITVVDELPINENGKVDRRALAARTQTRTAARASIRQPTTDMEREMQRIWSHVLHISLDSIGLDDSFFHLGGNSITAMRIVSEARKVGFKLSVADIFRHDVLEDLACHLSPEEEETDIVFVDRPPPVSVLEEITALGVSVDDVEDVLPLTSFQEKIVLDGETVGQHANYFYIDLEDLDVSKIQTSYWATLDKFSILRARFLHLEGKLWQVVFRQLRLPIHIEDVDDVNQAAHQFCVKDLHEMSSTDIPISITLLRHKDGVRLILRLSHAQYDGISFPIILQSLMDEYSGIERPAGPTFGRFLSYAAQQRTKAITYWTKVLTGSSLTVPEPILRPKAISGSPQRVYEEAEIDLPQLPSKTTPATLLSAAWALLLSHITGEDDVVFGHVVAGRNAAMSGIDEVVGTCLNIVPIRVNLPAAHTPRQLLLSVQEQFFFGEADLLGFKDIIEQCTDWPAGTTFDSMIQHQNIDEHPEIESAGAASQVQFFENSHLVPPSLFVVSYPRGRHLDVKLFGNTHILTKEMAKGLIDRLCKITEELGNLDCSLQVLRDRHGRLSEE.

The tract at residues 263 to 662 (FEQRSRAHPN…GRNDNQVKIR (400 aa)) is adenylation 1. One can recognise a Carrier 1 domain in the interval 789–865 (QPLSEVEKQV…NVAGQARRTT (77 aa)). The residue at position 826 (serine 826) is an O-(pantetheine 4'-phosphoryl)serine. The tract at residues 903–1171 (QDAFPCTSLQ…ITTVPVRIRL (269 aa)) is condensation 1. Residues 1332–1740 (LETQAHSRPD…GRKDAQVKIR (409 aa)) are adenylation 2. The Carrier 2 domain maps to 1865–1941 (QPRTKLERQL…NLAQATGTQG (77 aa)). Serine 1902 is subject to O-(pantetheine 4'-phosphoryl)serine. The segment at 1965–2249 (PAQLSPIQRL…FSTIFPVRVS (285 aa)) is condensation 2. Positions 2863 to 3255 (LAQPHEPAIC…ARKDAQIKIR (393 aa)) are adenylation 3. The 77-residue stretch at 3380–3456 (QPLSEAERKM…NVTHQAVAQL (77 aa)) folds into the Carrier 3 domain. Serine 3417 is modified (O-(pantetheine 4'-phosphoryl)serine). A condensation 3 region spans residues 3496–3761 (DAFPCTPLQE…FATLPLRVRL (266 aa)). Residues 3924–4321 (DRVRIHPNAP…GRKDDQVKLR (398 aa)) form an adenylation 4 region. Residues 4439 to 4450 (ELAQARTAQQGP) are compositionally biased toward polar residues. The tract at residues 4439-4459 (ELAQARTAQQGPKRQPASEAE) is disordered. Positions 4453-4529 (QPASEAERQM…EAATQAQMLG (77 aa)) constitute a Carrier 4 domain. O-(pantetheine 4'-phosphoryl)serine is present on serine 4490. Residues 4545-4837 (QSFAQARLWF…VNMQCLRVKI (293 aa)) form a condensation 4 region. The interval 5006–5405 (FRQQVAACAD…RRMDAQVKIR (400 aa)) is adenylation 5. One can recognise a Carrier 5 domain in the interval 5933-6009 (QPTSKTQRQL…DMAEGLPLAK (77 aa)). An O-(pantetheine 4'-phosphoryl)serine modification is found at serine 5970. Residues 6023–6315 (VEQSFAQRRL…VNMQCIRIRV (293 aa)) are condensation 5. An adenylation 6 region spans residues 6481–6766 (FRQQALLNPD…IINAYGPTEN (286 aa)). The Carrier 6 domain occupies 7394–7470 (QPTTDMEREM…DLACHLSPEE (77 aa)). Residue serine 7431 is modified to O-(pantetheine 4'-phosphoryl)serine. Residues 7501-7771 (EDVLPLTSFQ…CLNIVPIRVN (271 aa)) form a condensation 6 region.

It belongs to the NRP synthetase family.

It participates in secondary metabolite biosynthesis. Functionally, nonribosomal peptide synthetase; part of the gene cluster that mediates the biosynthesis of destruxins, insecticidal cyclic hexadepsipeptides which induce flaccid paralysis and visceral muscle contraction in insects through targeting the calcium channels and vacuolar-type ATPases. The aldo-keto reductase dtxS3 converts alpha-ketoisocaproic acid from deaminated leucine into alpha-hydroxyisocaproic acid (HIC), which is the first substrate for destruxin assembly by dtxS1. L-aspartate decarboxylase dtxS4 converts aspartic acid into beta-alanine, the last substrate for the destruxin assembly line performed by dtxS1. The nonribosomal peptide synthetase dtxS1 synthesizes destruxins B and B2, whereas the cytochrome P450 monooxygenase dtxS2 is required to convert destruxin B into other destruxin derivatives, including destructins C, D, A and E. Destruxin E-diol (ED) is further produced in a non-enzymatic manner from destruxin E. Destruxins play an important role in virulence and escape from insect host immune defenses. The polypeptide is Nonribosomal peptide synthetase dtxS1 (Metarhizium robertsii (strain ARSEF 23 / ATCC MYA-3075) (Metarhizium anisopliae (strain ARSEF 23))).